Consider the following 478-residue polypeptide: Lysosome membrane protein 2 (478 aa).

The Cytoplasmic segment spans residues M1–C4. The helical transmembrane segment at C5–R27 threads the bilayer. Residues V28–L433 lie on the Lumenal side of the membrane. 4 N-linked (GlcNAc...) asparagine glycosylation sites follow: N45, N68, N105, and N122. Residues L155–F191 are important for interaction with GBA1. 4 N-linked (GlcNAc...) asparagine glycosylation sites follow: N206, N224, N249, and N304. Intrachain disulfides connect C274-C329 and C312-C318. 3 N-linked (GlcNAc...) asparagine glycosylation sites follow: N325, N412, and N430. A helical membrane pass occupies residues V434 to R459. Residues G460–T478 lie on the Cytoplasmic side of the membrane.

It belongs to the CD36 family. As to quaternary structure, interacts with GBA1. In terms of processing, acylated by palmitic acid group(s). Heavily glycosylated. As to expression, detected in the extracts of brain, heart, lung, liver and kidney.

Its subcellular location is the lysosome membrane. Functionally, acts as a lysosomal receptor for glucosylceramidase (GBA1) targeting. This chain is Lysosome membrane protein 2 (Scarb2), found in Mus musculus (Mouse).